Reading from the N-terminus, the 955-residue chain is MVIASGAIDRRHLSPFTPTSDDSSSSFFSQDLVPTERQVGFWNSESMVDHKGSKSVFASPLEKIQPNGANHAGDPETPGGQAFKGLDILSLSNLMRQENASGSPSLSWGEILTNPISRLGLSTRETAFVEPTTADQHVPGYGKGLSSSSLSEVFSGKSREIVSGVLCQSTGTHTSIYDSDEPLESMEAIEAQTIGDLLPDDDDDLISGIADGFEFTGMSTNQDDADEDIFCTGGGMELENNDSVKGDKVQDGSFKSQISSGHSINKQPSRTLVVRNITANIEDSDLTVLFQQYGDIRMLYTSFKHHGFVTVSYYDIRAAQNAMRALHSKPLGLMKLDVQFSFPKENVPGKDIDKGMLVVSNIDSSISNDDLLQMLSVYGDVKEISSSPISCTKKFVEFYDVRAAEEALHDLNKGGISGPKFKVELSQHGEAGSCLRQQHSREWKQDSLPHQPKNSSPGTIGKLGTKCQDNSTVHNLFSPVNQQLESPTQCISTTGPQILSSPIRIKSTLQHNNQASVGDLSGPLGQGNFGRGIQTLHPRSLPEHHNRICNNSKSMTVSGRNASSRQDGVDHNIQKVGPAGFCGHSFDQNNEAFGFTEIGSCPLHGYHYTWNHTNVFPQSPSAPILWSNLQHPMHVHSYPGVPPHMLNTGSYPMDQHHLGSAPDNGGSFGNVHSFHPGSLGSIGLHGSPQLYPSELSAFASSRGNFREALFSPVGGGFQSLQQMCNAINGRNPMIHVSTSYDATNDRMRSRRHDGNPAQSENKRQFELDIDRIAKGEDSRTTLMIKNIPNKYNCKLLLAVIDENHRGTYDFIYLPIDFKNKCNVGYAFINMTDPQHIIPFYKTFNGKKWEKFNSEKVASLAYARIQGRSALIAHFQNSSLMNEDKWCRPMLFHKDGPNAGDQEPFPVGNNVRSRAGRNRSLISLDTKDASPSSSPDQESNSVGTANSTCRTTLEQT.

Positions 64-83 (IQPNGANHAGDPETPGGQAF) are disordered. RRM domains follow at residues 270–343 (RTLV…FSFP) and 355–428 (GMLV…LSQH). Disordered stretches follow at residues 436–465 (RQQH…KLGT) and 897–955 (NAGD…LEQT). Polar residues predominate over residues 935-955 (DQESNSVGTANSTCRTTLEQT).

Its function is as follows. Probable RNA-binding protein that may play a role in growth regulation. The sequence is that of Protein MEI2-like 3 (ML3) from Oryza sativa subsp. japonica (Rice).